The primary structure comprises 76 residues: Protein A9 homolog (76 aa).

An N-terminal signal peptide occupies residues 1–21 (MSCYSSILNSISTLAFLQVAS). Topologically, residues 23 to 45 (VIELVRHCIMHFCETRIRCNTLA) are intravirion. A helical transmembrane segment spans residues 46–66 (FVILKILITMVIYFMIGLGLF). Residues 67-76 (YLAKNGTEAE) are Virion surface-facing. Asparagine 71 carries N-linked (GlcNAc...) asparagine; by host glycosylation.

The protein belongs to the chordopoxvirinae A9 family.

It is found in the virion membrane. It localises to the host cytoplasm. Envelope protein. Required for an early step in virion morphogenesis. The sequence is that of Protein A9 homolog from Fowlpox virus (strain NVSL) (FPV).